We begin with the raw amino-acid sequence, 224 residues long: Abasic site processing protein YoqW (224 aa).

The Nucleophile role is filled by Cys2. Cys2 is subject to Thiazolidine linkage to a ring-opened DNA abasic site. Glu106 is a catalytic residue.

Belongs to the SOS response-associated peptidase family.

Its activity is regulated as follows. Formation and reversal of DNA-protein cross-link depends on DNA context. Catalyzes formation of the thiazolidine linkage in presence of abasic sites in single-stranded DNA. Mediates the reversal of the thiazolidine cross-link in presence of double stranded DNA. Sensor of abasic sites in single-stranded DNA (ssDNA) required to preserve genome integrity by promoting error-free repair of abasic sites. Recognizes and binds abasic sites in ssDNA at replication forks and chemically modifies the lesion by forming a covalent cross-link with DNA: forms a stable thiazolidine linkage between a ring-opened abasic site and the alpha-amino and sulfhydryl substituents of its N-terminal catalytic cysteine residue. The DNA-protein cross-link is then reversed: able to catalyze the reversal of the thiazolidine cross-link and cycle between a cross-link and a non-cross-linked state depending on DNA context: mediates self-reversal of the thiazolidine cross-link in double stranded DNA. May act as a protease: mediates autocatalytic processing of its N-terminal methionine in order to expose the catalytic cysteine. The chain is Abasic site processing protein YoqW (yoqW) from Bacillus subtilis (strain 168).